The chain runs to 324 residues: MPVNIKQLAQEFDKKEIGITQGHRLCPGCGAPITVKFVMMIARHLGYEPVVGLATGCLEVSTSIYPYTAWSVPYIHNAFENVAATMSGVETAYKALKNKGKIPEDKKYAFIAFGGDGGTYDIGLQSLSGMLERGHKVLYVLYDNEGYMNTGNQRSGSTPPGSDTTTAPVGKKLPGKVQLKKNIVEIVAAHENVYAATASLSEPMDFFAKVEKALNFDGPSFLAVFSPCVRFWRVNDDKTVEISKLAVETKYWPLYEVERGVYRVTRKPRQFKPVEEFLKAQGRFRKLLSRPDAKEIVDELQEYVDRRWERLLTLEEVTKDKPIR.

[4Fe-4S] cluster contacts are provided by Cys-26, Cys-29, and Cys-57. Residues 150-172 form a disordered region; sequence TGNQRSGSTPPGSDTTTAPVGKK. Low complexity predominate over residues 155–166; it reads SGSTPPGSDTTT. Cys-228 lines the [4Fe-4S] cluster pocket.

In terms of assembly, heterotetramer of one alpha, one beta, one delta and one gamma chain. It depends on [4Fe-4S] cluster as a cofactor.

It catalyses the reaction 2 oxidized [2Fe-2S]-[ferredoxin] + pyruvate + CoA = 2 reduced [2Fe-2S]-[ferredoxin] + acetyl-CoA + CO2 + H(+). This is Pyruvate synthase subunit PorB (porB) from Thermotoga maritima (strain ATCC 43589 / DSM 3109 / JCM 10099 / NBRC 100826 / MSB8).